A 1387-amino-acid chain; its full sequence is DNA-directed RNA polymerase subunit beta (1387 aa).

The protein belongs to the RNA polymerase beta chain family. The RNAP catalytic core consists of 2 alpha, 1 beta, 1 beta' and 1 omega subunit. When a sigma factor is associated with the core the holoenzyme is formed, which can initiate transcription.

It catalyses the reaction RNA(n) + a ribonucleoside 5'-triphosphate = RNA(n+1) + diphosphate. In terms of biological role, DNA-dependent RNA polymerase catalyzes the transcription of DNA into RNA using the four ribonucleoside triphosphates as substrates. This chain is DNA-directed RNA polymerase subunit beta, found in Xanthomonas campestris pv. campestris (strain 8004).